The sequence spans 227 residues: MTKNEYLIEKLQADLANHITELTSAYGEVTIECEVQNLLPVMIELRDREEFSFDQLIDLCGVDYLHYGDYDWETESATEHGFSRGVERQEAKAYAVNKPRFAVVYHLLSTQKNHRLRVKLFVEESHLIVPSVHHLWKSANWFEREAYDLYGILFDGHPDLRRLLTDYGFIGHPFRKDFPLSGEVEMRYDAKLQKVIYAPVDIVPRIVVPKVIRNDNRYIGNEGSKND.

The protein belongs to the complex I 30 kDa subunit family. In terms of assembly, NDH-1 is composed of 14 different subunits. Subunits NuoB, C, D, E, F, and G constitute the peripheral sector of the complex.

Its subcellular location is the cell inner membrane. The enzyme catalyses a quinone + NADH + 5 H(+)(in) = a quinol + NAD(+) + 4 H(+)(out). NDH-1 shuttles electrons from NADH, via FMN and iron-sulfur (Fe-S) centers, to quinones in the respiratory chain. The immediate electron acceptor for the enzyme in this species is believed to be ubiquinone. Couples the redox reaction to proton translocation (for every two electrons transferred, four hydrogen ions are translocated across the cytoplasmic membrane), and thus conserves the redox energy in a proton gradient. This is NADH-quinone oxidoreductase subunit C from Legionella pneumophila (strain Corby).